The primary structure comprises 311 residues: Pyrimidine-specific ribonucleoside hydrolase RihA (311 aa).

His-240 is an active-site residue.

Belongs to the IUNH family. RihA subfamily.

Functionally, hydrolyzes cytidine or uridine to ribose and cytosine or uracil, respectively. This Salmonella agona (strain SL483) protein is Pyrimidine-specific ribonucleoside hydrolase RihA.